The following is a 384-amino-acid chain: MNAPTPAPSPADVIPAPVGLLAELTHRCPLRCPYCSNPLELDRRSAELDTQAWLRVLTEAAGLGVLHVHLSGGEPTARPDIVEITAKCAELGLYSNLITSGVGGALAKLDALYDAGLDHVQLSVQGVDAANAEKIGGLKNAQPQKMQFAARVTELGLPLTLNSVIHRGNIHEVPGFIDLAVKLGAKRLEVAHTQYYGWAYVNRAALMPDKAQVDESIRIVEAARERLKGQLVIDLVVPDYYAKYPKACAGGWGRKLMNVTPQGKVLPCHAAETIPGLEFWYVTDHALGDIWTKSPAFAAYRGTGWMKEPCRSCDRREKDWGGCRCQALALTGDAANTDPACSLSPLHAKMRDLAKEEAAENPPDYIYRSIGTNVQNPLSEKAPL.

The Radical SAM core domain occupies 14-226 (IPAPVGLLAE…IRIVEAARER (213 aa)). [4Fe-4S] cluster-binding residues include C28, C32, and C35.

This sequence belongs to the radical SAM superfamily. PqqE family. In terms of assembly, interacts with PqqD. The interaction is necessary for activity of PqqE. [4Fe-4S] cluster serves as cofactor.

It carries out the reaction [PQQ precursor protein] + S-adenosyl-L-methionine = E-Y cross-linked-[PQQ precursor protein] + 5'-deoxyadenosine + L-methionine + H(+). The protein operates within cofactor biosynthesis; pyrroloquinoline quinone biosynthesis. Its function is as follows. Catalyzes the cross-linking of a glutamate residue and a tyrosine residue in the PqqA protein as part of the biosynthesis of pyrroloquinoline quinone (PQQ). This chain is PqqA peptide cyclase, found in Methylorubrum populi (strain ATCC BAA-705 / NCIMB 13946 / BJ001) (Methylobacterium populi).